Consider the following 672-residue polypeptide: Flap endonuclease 1 (672 aa).

Residues 1–106 (MGIKGLTKFI…SELEKRGEKR (106 aa)) form an N-domain region. A Mg(2+)-binding site is contributed by aspartate 34. Residues arginine 47 and arginine 72 each contribute to the DNA site. Positions 88, 160, 162, 181, and 183 each coordinate Mg(2+). An I-domain region spans residues 124 to 266 (EIKKQSGRTV…KTAYNLIKEY (143 aa)). Position 160 (glutamate 160) interacts with DNA. Positions 244 and 246 each coordinate DNA. Aspartate 246 contributes to the Mg(2+) binding site. Residues 349–357 (TQRRLDNFF) are interaction with PCNA. Residues 371–610 (ETKKEQTLPA…EDSPNSYNNI (240 aa)) form a disordered region. Basic and acidic residues-rich tracts occupy residues 413 to 493 (MKEE…KKSL), 502 to 526 (DSDK…EKIN), and 535 to 548 (DHSR…KDNI). A compositionally biased stretch (low complexity) spans 549-584 (SDINNNNNNNNSSSNNNNISNNHFNSVSSNSTFNSS). Residues 587-603 (LKSEDTLKSNSPLKEDS) are compositionally biased toward basic and acidic residues.

It belongs to the XPG/RAD2 endonuclease family. FEN1 subfamily. As to quaternary structure, interacts with PCNA1 and PCNA2. Three molecules of FEN1 bind to one PCNA trimer with each molecule binding to one PCNA monomer. PCNA stimulates the nuclease activity without altering cleavage specificity. The cofactor is Mg(2+). In terms of processing, phosphorylated. Phosphorylation upon DNA damage induces relocalization to the nuclear plasma.

Its subcellular location is the nucleus. The protein localises to the nucleolus. It is found in the nucleoplasm. It localises to the mitochondrion. Its function is as follows. Structure-specific nuclease with 5'-flap endonuclease and 5'-3' exonuclease activities involved in DNA replication and repair. During DNA replication, cleaves the 5'-overhanging flap structure that is generated by displacement synthesis when DNA polymerase encounters the 5'-end of a downstream Okazaki fragment. It enters the flap from the 5'-end and then tracks to cleave the flap base, leaving a nick for ligation. Also involved in the long patch base excision repair (LP-BER) pathway, by cleaving within the apurinic/apyrimidinic (AP) site-terminated flap. Acts as a genome stabilization factor that prevents flaps from equilibrating into structures that lead to duplications and deletions. Also possesses 5'-3' exonuclease activity on nicked or gapped double-stranded DNA, and exhibits RNase H activity. Also involved in replication and repair of rDNA and in repairing mitochondrial DNA. This chain is Flap endonuclease 1, found in Plasmodium falciparum (isolate 3D7).